Reading from the N-terminus, the 372-residue chain is Anhydro-N-acetylmuramic acid kinase (372 aa).

18 to 25 is a binding site for ATP; it reads GTSLDGID.

Belongs to the anhydro-N-acetylmuramic acid kinase family.

It carries out the reaction 1,6-anhydro-N-acetyl-beta-muramate + ATP + H2O = N-acetyl-D-muramate 6-phosphate + ADP + H(+). It functions in the pathway amino-sugar metabolism; 1,6-anhydro-N-acetylmuramate degradation. The protein operates within cell wall biogenesis; peptidoglycan recycling. In terms of biological role, catalyzes the specific phosphorylation of 1,6-anhydro-N-acetylmuramic acid (anhMurNAc) with the simultaneous cleavage of the 1,6-anhydro ring, generating MurNAc-6-P. Is required for the utilization of anhMurNAc either imported from the medium or derived from its own cell wall murein, and thus plays a role in cell wall recycling. The chain is Anhydro-N-acetylmuramic acid kinase from Thiobacillus denitrificans (strain ATCC 25259 / T1).